A 119-amino-acid polypeptide reads, in one-letter code: Large ribosomal subunit protein uL18 (119 aa).

The protein belongs to the universal ribosomal protein uL18 family. Part of the 50S ribosomal subunit; part of the 5S rRNA/L5/L18/L25 subcomplex. Contacts the 5S and 23S rRNAs.

Its function is as follows. This is one of the proteins that bind and probably mediate the attachment of the 5S RNA into the large ribosomal subunit, where it forms part of the central protuberance. The polypeptide is Large ribosomal subunit protein uL18 (Chlorobaculum tepidum (strain ATCC 49652 / DSM 12025 / NBRC 103806 / TLS) (Chlorobium tepidum)).